We begin with the raw amino-acid sequence, 320 residues long: Cytochrome c biogenesis protein CcsA (320 aa).

Transmembrane regions (helical) follow at residues Ile-9–Leu-29, Gly-44–Gly-64, Leu-71–Phe-91, Leu-99–Leu-119, Met-144–Ile-164, Ile-226–Asn-246, Trp-261–Leu-281, and Ala-287–Leu-307.

It belongs to the CcmF/CycK/Ccl1/NrfE/CcsA family. In terms of assembly, may interact with Ccs1.

The protein localises to the plastid. Its subcellular location is the chloroplast thylakoid membrane. Required during biogenesis of c-type cytochromes (cytochrome c6 and cytochrome f) at the step of heme attachment. This is Cytochrome c biogenesis protein CcsA from Carica papaya (Papaya).